Consider the following 145-residue polypeptide: Large ribosomal subunit protein uL15 (145 aa).

2 stretches are compositionally biased toward basic residues: residues 1–13 and 19–29; these read MVRE…RGGH and KAGRGKGKKGG. Positions 1-33 are disordered; sequence MVRERTKKLRGGHYGRGMKAGRGKGKKGGRGNA.

The protein belongs to the universal ribosomal protein uL15 family. Part of the 50S ribosomal subunit.

Binds to the 23S rRNA. This Thermoplasma volcanium (strain ATCC 51530 / DSM 4299 / JCM 9571 / NBRC 15438 / GSS1) protein is Large ribosomal subunit protein uL15.